Consider the following 237-residue polypeptide: UPF0174 protein YaaW (237 aa).

Belongs to the UPF0174 family.

The sequence is that of UPF0174 protein YaaW from Escherichia coli O157:H7.